The chain runs to 178 residues: Large ribosomal subunit protein uL6 (178 aa).

The protein belongs to the universal ribosomal protein uL6 family. In terms of assembly, part of the 50S ribosomal subunit.

This protein binds to the 23S rRNA, and is important in its secondary structure. It is located near the subunit interface in the base of the L7/L12 stalk, and near the tRNA binding site of the peptidyltransferase center. This Frankia alni (strain DSM 45986 / CECT 9034 / ACN14a) protein is Large ribosomal subunit protein uL6.